A 28-amino-acid chain; its full sequence is Morintide mO6 (28 aa).

One can recognise a Chitin-binding type-1 domain in the interval 1 to 28 (NGLCCSQYGFCGTTSAYCSRANGCQSNC). Intrachain disulfides connect C4–C18 and C24–C28.

Seeds (at protein level).

In terms of biological role, chitin-binding protein which functions in defense against chitin-containing fungal pathogens. This is Morintide mO6 from Moringa oleifera (Horseradish tree).